Here is a 279-residue protein sequence, read N- to C-terminus: Alcohol dehydrogenase-related 31 kDa protein (279 aa).

Tyr11–Leu34 provides a ligand contact to NAD(+). Residue Ser139 coordinates substrate. Catalysis depends on Tyr152, which acts as the Proton acceptor.

The protein belongs to the short-chain dehydrogenases/reductases (SDR) family.

The polypeptide is Alcohol dehydrogenase-related 31 kDa protein (Adhr) (Drosophila subobscura (Fruit fly)).